The sequence spans 256 residues: Autophagy-related protein 40 (256 aa).

An N-terminal signal peptide occupies residues 1–16; that stretch reads MFNLILWPLFLLTSVA. Topologically, residues 17–67 are lumenal; it reads IPLQLTLEVVYLTSSVDFSKASAAKTATSLGQSPVVITIYKSLLKYWSLYE. Residues 68 to 88 form a helical membrane-spanning segment; sequence FIHFIYLYTPIDAFLNFLPFT. Residues 89-256 are Cytoplasmic-facing; it reads SLLMSFGSIC…DILDETTELD (168 aa). The disordered stretch occupies residues 197 to 243; sequence QPQGDKNRYQNGDRESTKNGAAYQKSSQQSSSFEQNFTSTEFPNDYD. The span at 199-213 shows a compositional bias: basic and acidic residues; it reads QGDKNRYQNGDREST. Residues 222-238 show a composition bias toward low complexity; the sequence is SSQQSSSFEQNFTSTEF. An ATG8-binding motif is present at residues 242 to 245; that stretch reads YDFM.

In terms of assembly, interacts with ATG8 and ATG11.

The protein localises to the endoplasmic reticulum membrane. It localises to the preautophagosomal structure membrane. Acts as a receptor for reticulophagy. Directs autophagic sequestration of folded tubules/sheets derived from the cortical endoplasmic reticulum (cER) and the cytoplasmic endoplasmic reticulum (cytoER) into autophagosomes. Is not required for the cytoplasm-to-vacuole targeting pathway, mitophagy, pexophagy, and non-selective autophagy. This Saccharomyces cerevisiae (strain ATCC 204508 / S288c) (Baker's yeast) protein is Autophagy-related protein 40.